The sequence spans 64 residues: Large ribosomal subunit protein bL35 (64 aa).

The disordered stretch occupies residues 18-39 (GSGLVKHYPSNKHHKNTHKKEN). Over residues 26–39 (PSNKHHKNTHKKEN) the composition is skewed to basic residues.

It belongs to the bacterial ribosomal protein bL35 family.

This chain is Large ribosomal subunit protein bL35, found in Symbiobacterium thermophilum (strain DSM 24528 / JCM 14929 / IAM 14863 / T).